A 585-amino-acid polypeptide reads, in one-letter code: Optineurin (585 aa).

The disordered stretch occupies residues 1 to 32; the sequence is MSHQPLSCLTEKGDSSCETPGNGPSNMVHPNL. Positions 16 to 25 are enriched in polar residues; the sequence is SCETPGNGPS. The stretch at 38 to 181 forms a coiled coil; that stretch reads EELLQQMKEL…VSELQLKLNS (144 aa). Residues 58-220 are interaction with Rab8; it reads MKLNNQAMKG…GPTRTDSISM (163 aa). The LIR signature appears at 187–192; it reads DSFVEI. Ser188 and Ser209 each carry phosphoserine. 2 disordered regions span residues 200–220 and 269–299; these read EGAMKEMRNSAGPTRTDSISM and FEKKANGHSAIETQTEGSTQKEEEDKDPESV. A coiled-coil region spans residues 244–512; sequence CLREGNQKVE…LLKENNDFED (269 aa). A Phosphoserine modification is found at Ser346. The tract at residues 415-585 is interaction with HD; that stretch reads TKQQAEKVDK…LQIHVMDCII (171 aa). Residues 416–525 are interaction with MYO6; it reads KQQAEKVDKV…RQSLMEMQCR (110 aa). The UBAN signature appears at 478–483; the sequence is DFHAER. Ser531 bears the Phosphoserine mark. The segment at 555-585 adopts a CCHC NOA-type zinc-finger fold; it reads PRSIPIHSCPKCGEVLPDIDTLQIHVMDCII. Zn(2+) is bound by residues Cys563, Cys566, His579, and Cys583.

In terms of assembly, self-associates. Interacts with HD. Interacts with GTF3A. Interacts with MYO6. Interacts (via UBAN) with ubiquitinated TFRC. Interacts with GTP-bound Rab8 (RAB8A and/or RAB8B). Interacts with TBC1D17. Interacts with TBK1. Interacts with TRAF3. Binds to linear ubiquitin chains. Interacts with LC3 family members MAP1LC3A, MAP1LC3B, GABARAP, GABARAPL1 and GABARAPL2; OPTN phosphorylation increases the association (at least with MAP1LC3B). Interacts with RAB12; the interaction may be indirect. Interacts with TBK1; this interaction leads to the Golgi localization of TBK1 and its subsequent activation. Interacts with palmitoyltransferase ZDHHC17/HIP14; the interaction does not lead to palmitoylation of OPTN. Interacts with CYLD. Interacts with TOM1; the interaction is indirect and is mediated by MYO6, which acts as a bridge between TOM1 and OPTN. Interacts with USP12; the interaction is independent of USP12 deubiquitinase activity and may be involved in regulation of autophagic flux. In terms of processing, phosphorylated by TBK1, leading to restrict bacterial proliferation in case of infection.

It localises to the cytoplasm. The protein resides in the perinuclear region. It is found in the golgi apparatus. Its subcellular location is the trans-Golgi network. The protein localises to the cytoplasmic vesicle. It localises to the autophagosome. The protein resides in the recycling endosome. Its function is as follows. Plays an important role in the maintenance of the Golgi complex, in membrane trafficking, in exocytosis, through its interaction with myosin VI and Rab8. Links myosin VI to the Golgi complex and plays an important role in Golgi ribbon formation. Negatively regulates the induction of IFNB in response to RNA virus infection. Plays a neuroprotective role in the eye and optic nerve. Probably part of the TNF-alpha signaling pathway that can shift the equilibrium toward induction of cell death. May act by regulating membrane trafficking and cellular morphogenesis via a complex that contains Rab8 and huntingtin (HD). Mediates the interaction of Rab8 with the probable GTPase-activating protein TBC1D17 during Rab8-mediated endocytic trafficking, such as that of transferrin receptor (TFRC/TfR); regulates Rab8 recruitment to tubules emanating from the endocytic recycling compartment. Autophagy receptor that interacts directly with both the cargo to become degraded and an autophagy modifier of the MAP1 LC3 family; targets ubiquitin-coated bacteria (xenophagy) and appears to function in the same pathway as SQSTM1 and CALCOCO2/NDP52. This Rattus norvegicus (Rat) protein is Optineurin (Optn).